The chain runs to 112 residues: 2Fe-2S ferredoxin (112 aa).

Residues 5-107 (IKVTFIINDG…GIKVRLPSAT (103 aa)) form the 2Fe-2S ferredoxin-type domain. Residues C42, C48, C51, and C88 each coordinate [2Fe-2S] cluster.

This sequence belongs to the adrenodoxin/putidaredoxin family. [2Fe-2S] cluster is required as a cofactor.

In terms of biological role, ferredoxin are iron-sulfur proteins that transfer electrons in a wide variety of metabolic reactions. This chain is 2Fe-2S ferredoxin (fdxB), found in Rickettsia montanensis.